The chain runs to 640 residues: UvrABC system protein C (640 aa).

The 80-residue stretch at 22 to 101 folds into the GIY-YIG domain; sequence NDPGCYLMKD…IKSHQPYFNV (80 aa). The UVR domain maps to 211 to 246; sequence DELRILLEKQMISFSESLKFEEAGSVRDQLKGIDRL.

This sequence belongs to the UvrC family. Interacts with UvrB in an incision complex.

Its subcellular location is the cytoplasm. In terms of biological role, the UvrABC repair system catalyzes the recognition and processing of DNA lesions. UvrC both incises the 5' and 3' sides of the lesion. The N-terminal half is responsible for the 3' incision and the C-terminal half is responsible for the 5' incision. The chain is UvrABC system protein C from Prochlorococcus marinus (strain NATL2A).